The primary structure comprises 570 residues: MPVTMSRRAYAGMFGPTTGDKIRLADTELLIEVERDFTIYGEEVKFGGGKVIRDGMGQSQRSRAEGAVDTLITNVVILDHTGVVKADVGLKDGRIAAIGKGGNPDIQPGVTITIGPGTEIIAGEGKILTAGGVDTHIHFIAPQQIEEALCSGVTTMLGGGSGPAEGTKATTCTSGPWHMMRMMQAAESLPMNIGFFGKGNASKPAALIEMVEAGACGLKLHEDWGTTPAAIDCCLSVCDALDVQATLHSDTLNESGFVETTIAAFKGRTIHAFHTEGAGGGHAPDIIKVVGEQNVLPSSTNPTRPFTRNTLDEHLDMLMVCHHLDPHIAEDIAFAESRIRKETIAAEDILHDLGALSMFSSDSQAMGRVGEVVIRCWQTADKMKRQRGALPEDISGNDNFRARRYIAKYTINPAIAHGISHVVGSVEPGKLADLVLWSPAFFGVKPDLVLKGGSIAYALMGDANASIPTPQPVHYRPMFASFGRSLIESSLIFVSAVSIERGVGARYGLSRPLEAVRGTRGSISKKSMILNDATPVMEVDPETYEVRADGELLTCEPADVLPMAQRYFLF.

Residues 131 to 570 (GGVDTHIHFI…LPMAQRYFLF (440 aa)) form the Urease domain. Residues His-136, His-138, and Lys-219 each coordinate Ni(2+). Lys-219 is modified (N6-carboxylysine). Residue His-221 participates in substrate binding. Ni(2+)-binding residues include His-248 and His-274. The active-site Proton donor is the His-322. Asp-362 contributes to the Ni(2+) binding site.

It belongs to the metallo-dependent hydrolases superfamily. Urease alpha subunit family. As to quaternary structure, heterotrimer of UreA (gamma), UreB (beta) and UreC (alpha) subunits. Three heterotrimers associate to form the active enzyme. Ni cation is required as a cofactor. Carboxylation allows a single lysine to coordinate two nickel ions.

The protein resides in the cytoplasm. The enzyme catalyses urea + 2 H2O + H(+) = hydrogencarbonate + 2 NH4(+). It participates in nitrogen metabolism; urea degradation; CO(2) and NH(3) from urea (urease route): step 1/1. The protein is Urease subunit alpha of Methylocella silvestris (strain DSM 15510 / CIP 108128 / LMG 27833 / NCIMB 13906 / BL2).